A 386-amino-acid chain; its full sequence is MGNTEIVAMILAGGQGSRLGVLTKKLAKPAVPFGGKYRIIDFPLSNCANSGIYTVGVLTQYKPLELNAHIGIGLPWDLDRKDGGVSILPPYQEEKGGNWYKGTANAIYQNIEFVDRYDPEYVLILSGDHIYKMNYTKMLEFHKEKNADATIGVIEVPVNEASRFGIMNTRDDMSIYEFEEKPKIPKSNLASMGIYIFNWKTLKKYLRNDEANKGSSNDFGKDIIPSMLNDGGKMVAYPFEGYWKDVGTIESLWQANMDLLKSDNKLNLHDQDWRIYSTNPVRPAQYIGENAKVTNSLIVEGCTVNGTVQNSVLFQGVQVGKNTIIKDSVIMTNAKIGDNVIIEKAIIGNDAVIRKDCVIGTGDEIEIVAAKEEVKMGSIMKNNKAV.

Residues Tyr-100, Gly-165, 180–181 (EK), and Ser-191 contribute to the alpha-D-glucose 1-phosphate site.

Belongs to the bacterial/plant glucose-1-phosphate adenylyltransferase family. Homotetramer.

The catalysed reaction is alpha-D-glucose 1-phosphate + ATP + H(+) = ADP-alpha-D-glucose + diphosphate. It participates in glycan biosynthesis; glycogen biosynthesis. In terms of biological role, involved in the biosynthesis of ADP-glucose, a building block required for the elongation reactions to produce glycogen. Catalyzes the reaction between ATP and alpha-D-glucose 1-phosphate (G1P) to produce pyrophosphate and ADP-Glc. The sequence is that of Glucose-1-phosphate adenylyltransferase from Clostridium botulinum (strain Eklund 17B / Type B).